The following is a 344-amino-acid chain: MQTLTIIRPDDMHLHLRDGDALKAVAPYTARQMGRAVIMPNLKPPVVSVADALAYKARIMAALPEGSAFEPLMTLYLTDQATPELVREAKAAGIVAFKLYPAGATTNSDSGVTDLFKLIPVLEEMAKQGILFLVHGEVTDPEIDIFDREAAFIGRVMKPVLAQVPNLKVVFEHITTAEAARLVLEAGDNVAATVTPQHLLLNRNDLLVGGVRPHHFCLPVLKRETHRQALVAAVTGEKAHKFFLGTDSAPHAKSAKENACGCAGMFSAMTAIELYAEVFEKAGALDKLEAFASKNGARFYGIPENADTITLVKQSQTVPASVPYGDGELVPMRAGGEIGWTVQY.

Positions 13 and 15 each coordinate Zn(2+). Residues 15 to 17 (HLR) and Asn-41 contribute to the substrate site. 3 residues coordinate Zn(2+): Lys-98, His-135, and His-173. The residue at position 98 (Lys-98) is an N6-carboxylysine. His-135 serves as a coordination point for substrate. Leu-218 is a substrate binding site. Residue Asp-247 participates in Zn(2+) binding. Residue Asp-247 is part of the active site. Residues His-251 and Ala-263 each coordinate substrate.

This sequence belongs to the metallo-dependent hydrolases superfamily. DHOase family. Class II DHOase subfamily. As to quaternary structure, homodimer. It depends on Zn(2+) as a cofactor.

The catalysed reaction is (S)-dihydroorotate + H2O = N-carbamoyl-L-aspartate + H(+). It participates in pyrimidine metabolism; UMP biosynthesis via de novo pathway; (S)-dihydroorotate from bicarbonate: step 3/3. In terms of biological role, catalyzes the reversible cyclization of carbamoyl aspartate to dihydroorotate. This chain is Dihydroorotase, found in Neisseria gonorrhoeae (strain ATCC 700825 / FA 1090).